The sequence spans 185 residues: Ribosome-recycling factor (185 aa).

This sequence belongs to the RRF family.

It is found in the cytoplasm. Functionally, responsible for the release of ribosomes from messenger RNA at the termination of protein biosynthesis. May increase the efficiency of translation by recycling ribosomes from one round of translation to another. This is Ribosome-recycling factor from Pseudomonas entomophila (strain L48).